We begin with the raw amino-acid sequence, 497 residues long: Glycerol kinase (497 aa).

Thr12 is a binding site for ADP. 3 residues coordinate ATP: Thr12, Thr13, and Ser14. Position 12 (Thr12) interacts with sn-glycerol 3-phosphate. Arg16 serves as a coordination point for ADP. Residues Arg82, Glu83, Tyr134, and Asp243 each contribute to the sn-glycerol 3-phosphate site. Residues Arg82, Glu83, Tyr134, Asp243, and Gln244 each contribute to the glycerol site. Positions 265 and 308 each coordinate ADP. Residues Thr265, Gly308, Gln312, and Gly409 each coordinate ATP. ADP is bound by residues Gly409 and Asn413.

The protein belongs to the FGGY kinase family. As to quaternary structure, homotetramer and homodimer (in equilibrium).

The enzyme catalyses glycerol + ATP = sn-glycerol 3-phosphate + ADP + H(+). Its pathway is polyol metabolism; glycerol degradation via glycerol kinase pathway; sn-glycerol 3-phosphate from glycerol: step 1/1. Its activity is regulated as follows. Activated by phosphorylation and inhibited by fructose 1,6-bisphosphate (FBP). Its function is as follows. Key enzyme in the regulation of glycerol uptake and metabolism. Catalyzes the phosphorylation of glycerol to yield sn-glycerol 3-phosphate. In Thermoanaerobacter sp. (strain X514), this protein is Glycerol kinase.